The chain runs to 109 residues: Mitochondrial import receptor subunit TOM22 homolog (109 aa).

The Cytoplasmic portion of the chain corresponds to 1–60 (MALVRDDFDDIPDSEIHETIVERIEGLGEMFPDALRSAVHSTVDWSIWGVKGVFSLTKST). The chain crosses the membrane as a helical span at residues 61 to 77 (IWVVSTTSLIAFLPYII). Topologically, residues 78-109 (EKERSDLEKTQVAQQRQMLLGPSAAIQQAKTA) are mitochondrial intermembrane.

This sequence belongs to the Tom22 family. As to quaternary structure, forms part of the preprotein translocase complex of the outer mitochondrial membrane (TOM complex).

The protein resides in the mitochondrion outer membrane. Its function is as follows. Central receptor component of the translocase of the outer membrane of mitochondria (TOM complex) responsible for the recognition and translocation of cytosolically synthesized mitochondrial preproteins. Together with the peripheral receptor tomm-20 functions as the transit peptide receptor and facilitates the movement of preproteins into the translocation pore. In Caenorhabditis elegans, this protein is Mitochondrial import receptor subunit TOM22 homolog.